The primary structure comprises 241 residues: Methylthioribulose-1-phosphate dehydratase (241 aa).

Position 96 (Cys-96) interacts with substrate. 2 residues coordinate Zn(2+): His-114 and His-116. Glu-138 serves as the catalytic Proton donor/acceptor. His-194 contributes to the Zn(2+) binding site.

It belongs to the aldolase class II family. MtnB subfamily. Zn(2+) serves as cofactor.

The protein resides in the cytoplasm. The catalysed reaction is 5-(methylsulfanyl)-D-ribulose 1-phosphate = 5-methylsulfanyl-2,3-dioxopentyl phosphate + H2O. Its pathway is amino-acid biosynthesis; L-methionine biosynthesis via salvage pathway; L-methionine from S-methyl-5-thio-alpha-D-ribose 1-phosphate: step 2/6. Functionally, catalyzes the dehydration of methylthioribulose-1-phosphate (MTRu-1-P) into 2,3-diketo-5-methylthiopentyl-1-phosphate (DK-MTP-1-P). Functions in the methionine salvage pathway. May play a role in apoptosis. This is Methylthioribulose-1-phosphate dehydratase from Danio rerio (Zebrafish).